Reading from the N-terminus, the 368-residue chain is MMKLAEIQAACGVLCVDLAAVVDNYQTLARHVAPAQCGAVLKANGYGLGAEAIAPALYAANCRIFFVAQLSEGVALRNILSADAMVVLLNGVMPQAMPFCCAQQITPLLNSVDQVMTWLALQEARSQRRPVLIQLDSGMSRLGVTPEQLARLAAIFRQRGWAAPDYIISHLANADRPDHALNVYQHTLLQQAKKAFPTSRYSLANSCGMFLHPAWREDLCRPGVALFGVAQPWFSTPLKPAFTLTLTILRVQDVPVGTPIGYGSTVTTTRPLRIATVSAGYADGIPRNLRPPAGVCWRGVRLPVLGRVCMDSFMVDASAIMPTSGDVVEFIGVSQTLEEVAAACDTIPYEIMARLGARFRRIMQPAEA.

K42 (proton acceptor; specific for D-alanine) is an active-site residue. K42 bears the N6-(pyridoxal phosphate)lysine mark. R141 contributes to the substrate binding site. Y262 acts as the Proton acceptor; specific for L-alanine in catalysis. M310 is a substrate binding site.

This sequence belongs to the alanine racemase family. Requires pyridoxal 5'-phosphate as cofactor.

It carries out the reaction L-alanine = D-alanine. The protein operates within amino-acid biosynthesis; D-alanine biosynthesis; D-alanine from L-alanine: step 1/1. In terms of biological role, catalyzes the interconversion of L-alanine and D-alanine. May also act on other amino acids. This is Alanine racemase 3 (alr3) from Salmonella typhi.